Here is a 97-residue protein sequence, read N- to C-terminus: Large ribosomal subunit protein uL23 (97 aa).

It belongs to the universal ribosomal protein uL23 family. As to quaternary structure, part of the 50S ribosomal subunit. Contacts protein L29, and trigger factor when it is bound to the ribosome.

One of the early assembly proteins it binds 23S rRNA. One of the proteins that surrounds the polypeptide exit tunnel on the outside of the ribosome. Forms the main docking site for trigger factor binding to the ribosome. The sequence is that of Large ribosomal subunit protein uL23 from Marinobacter nauticus (strain ATCC 700491 / DSM 11845 / VT8) (Marinobacter aquaeolei).